The primary structure comprises 378 residues: Lipid-A-disaccharide synthase (378 aa).

This sequence belongs to the LpxB family.

It carries out the reaction a lipid X + a UDP-2-N,3-O-bis[(3R)-3-hydroxyacyl]-alpha-D-glucosamine = a lipid A disaccharide + UDP + H(+). The protein operates within bacterial outer membrane biogenesis; LPS lipid A biosynthesis. In terms of biological role, condensation of UDP-2,3-diacylglucosamine and 2,3-diacylglucosamine-1-phosphate to form lipid A disaccharide, a precursor of lipid A, a phosphorylated glycolipid that anchors the lipopolysaccharide to the outer membrane of the cell. This Pseudomonas aeruginosa (strain LESB58) protein is Lipid-A-disaccharide synthase.